A 468-amino-acid polypeptide reads, in one-letter code: Methylenetetrahydrofolate--tRNA-(uracil-5-)-methyltransferase TrmFO (468 aa).

10 to 15 (GGGLAG) provides a ligand contact to FAD.

This sequence belongs to the MnmG family. TrmFO subfamily. The cofactor is FAD.

It is found in the cytoplasm. It carries out the reaction uridine(54) in tRNA + (6R)-5,10-methylene-5,6,7,8-tetrahydrofolate + NADH + H(+) = 5-methyluridine(54) in tRNA + (6S)-5,6,7,8-tetrahydrofolate + NAD(+). The catalysed reaction is uridine(54) in tRNA + (6R)-5,10-methylene-5,6,7,8-tetrahydrofolate + NADPH + H(+) = 5-methyluridine(54) in tRNA + (6S)-5,6,7,8-tetrahydrofolate + NADP(+). Functionally, catalyzes the folate-dependent formation of 5-methyl-uridine at position 54 (M-5-U54) in all tRNAs. This Chelativorans sp. (strain BNC1) protein is Methylenetetrahydrofolate--tRNA-(uracil-5-)-methyltransferase TrmFO.